Here is a 104-residue protein sequence, read N- to C-terminus: Vacuolar ATPase assembly integral membrane protein VMA21 (104 aa).

Over 1 to 21 (MSNRVSTGKMAMAPQESVQPA) the chain is Cytoplasmic. A helical transmembrane segment spans residues 22–42 (VLYKLVLFALLMAVVPIGTYF). At 43–65 (STLNYLWDGASRCGFPSGLCSTT) the chain is on the lumenal side. The chain crosses the membrane as a helical span at residues 66-86 (FAAISAIAAANLILVGYVVVA). At 87–104 (FREDAASRTGPLPEKKTS) the chain is on the cytoplasmic side. The short motif at 101–104 (KKTS) is the Prevents secretion from ER element.

The protein belongs to the VMA21 family.

The protein localises to the endoplasmic reticulum membrane. Its subcellular location is the endoplasmic reticulum-Golgi intermediate compartment membrane. The protein resides in the cytoplasmic vesicle. It localises to the COPII-coated vesicle membrane. Required for the assembly of the V0 complex of the vacuolar ATPase (V-ATPase) in the endoplasmic reticulum. In Cryptococcus neoformans var. neoformans serotype D (strain B-3501A) (Filobasidiella neoformans), this protein is Vacuolar ATPase assembly integral membrane protein VMA21.